We begin with the raw amino-acid sequence, 303 residues long: MAPRSVLETIQSVLQKNMVREFLAEFLSTYVMMVFGLGSVAHMVLGENSGSYLGVNLGFGFGVTMGVHVAGGISGAHMNAAVTFTNCALGRMTWKKFPVYVLGQFLGSFSAAATTYLIFYGAINHFAGGDLLVTGSKATANIFATYLPEYMTLWRGFLDEAFVTGMLQLCLFAITDKKNSPALQGTEPLVIGILVTVLGVSLGMNSGYAINPSRDLPPRLFTFIAGWGKQVFRAGNNWWWVPVVAPLLGAYLGGIVYLGLIHPSIPQDPQRLENFTARDQKVTASYKNAASANISGSVPLEHF.

Residues 1 to 21 (MAPRSVLETIQSVLQKNMVRE) lie on the Cytoplasmic side of the membrane. Serine 5 bears the Phosphoserine mark. A helical membrane pass occupies residues 22–39 (FLAEFLSTYVMMVFGLGS). Residues 40 to 52 (VAHMVLGENSGSY) lie on the Extracellular side of the membrane. The chain crosses the membrane as a helical span at residues 53-70 (LGVNLGFGFGVTMGVHVA). The Cytoplasmic segment spans residues 71–74 (GGIS). Residues 75–88 (GAHMNAAVTFTNCA) constitute an intramembrane region (discontinuously helical). The NPA 1 motif lies at 79–81 (NAA). The Cytoplasmic portion of the chain corresponds to 89 to 96 (LGRMTWKK). The helical transmembrane segment at 97 to 117 (FPVYVLGQFLGSFSAAATTYL) threads the bilayer. The Extracellular segment spans residues 118-152 (IFYGAINHFAGGDLLVTGSKATANIFATYLPEYMT). A helical membrane pass occupies residues 153 to 173 (LWRGFLDEAFVTGMLQLCLFA). The Cytoplasmic portion of the chain corresponds to 174–185 (ITDKKNSPALQG). The helical transmembrane segment at 186–202 (TEPLVIGILVTVLGVSL) threads the bilayer. Residues 203–206 (GMNS) are Extracellular-facing. The discontinuously helical intramembrane region spans 207–220 (GYAINPSRDLPPRL). The NPA 2 signature appears at 211-213 (NPS). Residues 221–238 (FTFIAGWGKQVFRAGNNW) are Extracellular-facing. The helical transmembrane segment at 239–260 (WWVPVVAPLLGAYLGGIVYLGL) threads the bilayer. Residues 261-303 (IHPSIPQDPQRLENFTARDQKVTASYKNAASANISGSVPLEHF) lie on the Cytoplasmic side of the membrane.

Belongs to the MIP/aquaporin (TC 1.A.8) family. In terms of assembly, homotetramer; each monomer provides an independent glycerol/water pore. Two homotetramers on opposing membranes can dimerize, forming a cell-cell junction. Interacts with PLIN1. Post-translationally, phosphorylation by PKA could prevent the interaction with PLIN1. In terms of tissue distribution, detected in proximal tubules in kidney. Detected in the capillary network between muscle fibers in skeletal muscle and heart, and in spermatids and on spermatozoa tails in testis and epididymis. Detected in white and brown adipose tissue, especially on small blood vessels (at protein level). Detected in kidney and white adipose tissue.

Its subcellular location is the cell membrane. It localises to the cytoplasmic vesicle membrane. The protein localises to the lipid droplet. It carries out the reaction glycerol(in) = glycerol(out). The catalysed reaction is H2O(in) = H2O(out). It catalyses the reaction urea(in) = urea(out). Its activity is regulated as follows. Glycerol transport is regulated by pH, with the porin being permeable to glycerol at pH 7.4 but not at pH 5.5. Water permeability, however, is not influenced by pH. Functionally, aquaglyceroporins form homotetrameric transmembrane channels, with each monomer independently mediating glycerol and water transport across the plasma membrane along their osmotic gradient. Could also be permeable to urea. Mediates the efflux of glycerol, formed upon triglyceride hydrolysis, to avoid its accumulation in adipocytes and to make it available to other tissues. In the kidney, mediates the reabsorption of glycerol, preventing its loss in urine, again participating to energy homeostasis. In pancreatic beta cells, it also mediates the efflux of glycerol, regulating its intracellular levels. In Mus musculus (Mouse), this protein is Aquaporin-7.